Consider the following 111-residue polypeptide: Photosystem II reaction center Psb28 protein (111 aa).

It belongs to the Psb28 family. As to quaternary structure, part of the photosystem II complex.

It localises to the cellular thylakoid membrane. The polypeptide is Photosystem II reaction center Psb28 protein (Nostoc sp. (strain PCC 7120 / SAG 25.82 / UTEX 2576)).